Consider the following 511-residue polypeptide: Glutamyl-tRNA(Gln) amidotransferase subunit B, mitochondrial (511 aa).

The transit peptide at 1–6 directs the protein to the mitochondrion; it reads MLRRYL.

This sequence belongs to the GatB/GatE family. GatB subfamily. As to quaternary structure, subunit of the heterotrimeric GatFAB amidotransferase (AdT) complex, composed of A, B and F subunits.

It is found in the mitochondrion. It catalyses the reaction L-glutamyl-tRNA(Gln) + L-glutamine + ATP + H2O = L-glutaminyl-tRNA(Gln) + L-glutamate + ADP + phosphate + H(+). In terms of biological role, allows the formation of correctly charged Gln-tRNA(Gln) through the transamidation of misacylated Glu-tRNA(Gln) in the mitochondria. The reaction takes place in the presence of glutamine and ATP through an activated gamma-phospho-Glu-tRNA(Gln). The polypeptide is Glutamyl-tRNA(Gln) amidotransferase subunit B, mitochondrial (Lodderomyces elongisporus (strain ATCC 11503 / CBS 2605 / JCM 1781 / NBRC 1676 / NRRL YB-4239) (Yeast)).